The primary structure comprises 200 residues: Eukaryotic translation initiation factor isoform 4E (200 aa).

Residues 44–49 (QGVAWG), Lys76, and 94–95 (WE) contribute to the mRNA site. Cysteines 99 and 138 form a disulfide. MRNA is bound by residues 145-150 (RRSQDK) and 189-192 (KRER).

Belongs to the eukaryotic initiation factor 4E family. In terms of assembly, EIF4F is a multi-subunit complex, the composition of which varies with external and internal environmental conditions. It is composed of at least EIF4A, EIF4E and EIF4G. EIF4E is also known to interact with other partners. In higher plants two isoforms of EIF4F have been identified, named isoform EIF4F and isoform EIF(iso)4F. Isoform EIF4F has subunits p220 and p26, whereas isoform EIF(iso)4F has subunits p82 and p28. (Microbial infection) Interacts with viral genome-linked protein (VPg); this interaction is possible in susceptible hosts but impaired in resistant plants. According to the redox status, the Cys-99-Cys-138 disulfide bridge may have a role in regulating protein function by affecting its ability to bind capped mRNA. As to expression, mostly expressed in roots and leaves, and, to a lower extent, in stems, flowers and immature green fruits.

The protein localises to the cytoplasm. The protein resides in the nucleus. Component of the protein complex eIF4F, which is involved in the recognition of the mRNA cap, ATP-dependent unwinding of 5'-terminal secondary structure and recruitment of mRNA to the ribosome. Recognizes and binds the 7-methylguanosine-containing mRNA cap during an early step in the initiation of protein synthesis and facilitates ribosome binding by inducing the unwinding of the mRNAs secondary structures. Key component of recessive resistance to potyviruses. Its function is as follows. (Microbial infection) Susceptibility host factor required for viral infection by recruiting viral RNAs to the host ribosomal complex via an interaction with viral genome-linked protein (VPg). This chain is Eukaryotic translation initiation factor isoform 4E, found in Solanum lycopersicum (Tomato).